The chain runs to 238 residues: uncharacterized protein (238 aa).

A disordered region spans residues 219 to 238 (EESINNNVDDTDDIDNDNFI). Acidic residues predominate over residues 227–238 (DDTDDIDNDNFI).

This is an uncharacterized protein from Buchnera aphidicola subsp. Acyrthosiphon pisum (strain APS) (Acyrthosiphon pisum symbiotic bacterium).